The primary structure comprises 722 residues: Protein HAPLESS 2-A (722 aa).

The first 24 residues, 1–24 (MPRRRGTPLPTILLLLAFVGGACG), serve as a signal peptide directing secretion. Residues 25–552 (TEILSKSRLE…LFDFGCHIQY (528 aa)) lie on the Extracellular side of the membrane. Disulfide bonds link Cys-36–Cys-48, Cys-129–Cys-159, Cys-141–Cys-188, Cys-160–Cys-315, Cys-162–Cys-171, Cys-298–Cys-322, and Cys-435–Cys-473. The helical transmembrane segment at 553–573 (VCIGWILLLLLIPAAVVFLWL) threads the bilayer. The Cytoplasmic segment spans residues 574–722 (LHQEGLFDPL…HRDGHYSPSV (149 aa)). Residues 598–641 (RRRHQKGRHHRHHHDHRHRHGHSHGDHHHHYHGGHHQRRRHHHP) show a composition bias toward basic residues. 2 disordered regions span residues 598–665 (RRRH…RNHH) and 680–722 (RLDR…SPSV). Basic and acidic residues predominate over residues 646 to 662 (VEGHHHDRQQHSHEAGR). The segment covering 701–711 (RRSRHERHGGH) has biased composition (basic residues). Over residues 712 to 722 (GHRDGHYSPSV) the composition is skewed to basic and acidic residues.

It belongs to the HAP2/GCS1 family.

It localises to the endoplasmic reticulum membrane. The protein localises to the cell membrane. Required for male fertility. Plays a role in pollen tube guidance and successful gamete attachment. Essential for the fusion of gametes during double fertilization, where one male gamete fuses with the egg to produce a zygote, and another male gamete fuses with the central cell to produce the endosperm. Mediates the fusion of cell membranes. Not required for pollen tube outgrowth. This Oryza sativa subsp. japonica (Rice) protein is Protein HAPLESS 2-A (HAP2A).